The chain runs to 34 residues: Photosystem II reaction center protein Psb30 (34 aa).

A helical transmembrane segment spans residues 6 to 26; that stretch reads VIGQLVSTGLIGLLGPAVIIL.

Belongs to the Psb30/Ycf12 family. As to quaternary structure, PSII is composed of 1 copy each of membrane proteins PsbA, PsbB, PsbC, PsbD, PsbE, PsbF, PsbH, PsbI, PsbJ, PsbK, PsbL, PsbM, PsbT, PsbX, PsbY, PsbZ, Psb30/Ycf12, peripheral proteins of the oxygen-evolving complex and a large number of cofactors. It forms dimeric complexes.

It localises to the plastid. The protein localises to the chloroplast thylakoid membrane. Functionally, a core subunit of photosystem II (PSII), probably helps stabilize the reaction center. The chain is Photosystem II reaction center protein Psb30 from Skeletonema costatum (Marine centric diatom).